Consider the following 277-residue polypeptide: Phosphatidylglycerol--prolipoprotein diacylglyceryl transferase (277 aa).

A run of 7 helical transmembrane segments spans residues 21–41 (LAVR…LWLA), 60–80 (LLFA…VLFY), 95–115 (VWTG…AMLW), 124–144 (FFTI…AGRL), 176–196 (SQLY…NWFI), 203–223 (GTVS…VEYV), and 239–259 (MGQI…LWAF). A 1,2-diacyl-sn-glycero-3-phospho-(1'-sn-glycerol) is bound at residue Arg143.

This sequence belongs to the Lgt family.

It localises to the cell inner membrane. It carries out the reaction L-cysteinyl-[prolipoprotein] + a 1,2-diacyl-sn-glycero-3-phospho-(1'-sn-glycerol) = an S-1,2-diacyl-sn-glyceryl-L-cysteinyl-[prolipoprotein] + sn-glycerol 1-phosphate + H(+). Its pathway is protein modification; lipoprotein biosynthesis (diacylglyceryl transfer). Functionally, catalyzes the transfer of the diacylglyceryl group from phosphatidylglycerol to the sulfhydryl group of the N-terminal cysteine of a prolipoprotein, the first step in the formation of mature lipoproteins. The polypeptide is Phosphatidylglycerol--prolipoprotein diacylglyceryl transferase (Aliivibrio fischeri (strain ATCC 700601 / ES114) (Vibrio fischeri)).